Reading from the N-terminus, the 149-residue chain is MSDNGFLFRFKDGQTYMDTWPERKELAPMFPEQRVIKATKFAVKVMPAVAVISVLTQMVFNNSAALPQSIIIALFAISMPLQGFWWLGNRANTKLPPALVNWYRELYQKIIESGAALEPLKQRPRYKDLANILNKAFKQLDKTALERWF.

The next 2 helical transmembrane spans lie at 41–61 and 69–89; these read FAVKVMPAVAVISVLTQMVFN and SIIIALFAISMPLQGFWWLGN.

It belongs to the UPF0208 family.

The protein localises to the cell inner membrane. In Aliivibrio salmonicida (strain LFI1238) (Vibrio salmonicida (strain LFI1238)), this protein is UPF0208 membrane protein VSAL_I2111.